We begin with the raw amino-acid sequence, 140 residues long: Putative pre-16S rRNA nuclease (140 aa).

The protein belongs to the YqgF nuclease family.

The protein resides in the cytoplasm. In terms of biological role, could be a nuclease involved in processing of the 5'-end of pre-16S rRNA. This chain is Putative pre-16S rRNA nuclease, found in Enterococcus faecalis (strain ATCC 700802 / V583).